A 108-amino-acid polypeptide reads, in one-letter code: Pyrimidine/purine nucleoside phosphorylase (108 aa).

It belongs to the nucleoside phosphorylase PpnP family.

The enzyme catalyses a purine D-ribonucleoside + phosphate = a purine nucleobase + alpha-D-ribose 1-phosphate. The catalysed reaction is adenosine + phosphate = alpha-D-ribose 1-phosphate + adenine. It carries out the reaction cytidine + phosphate = cytosine + alpha-D-ribose 1-phosphate. It catalyses the reaction guanosine + phosphate = alpha-D-ribose 1-phosphate + guanine. The enzyme catalyses inosine + phosphate = alpha-D-ribose 1-phosphate + hypoxanthine. The catalysed reaction is thymidine + phosphate = 2-deoxy-alpha-D-ribose 1-phosphate + thymine. It carries out the reaction uridine + phosphate = alpha-D-ribose 1-phosphate + uracil. It catalyses the reaction xanthosine + phosphate = alpha-D-ribose 1-phosphate + xanthine. Catalyzes the phosphorolysis of diverse nucleosides, yielding D-ribose 1-phosphate and the respective free bases. Can use uridine, adenosine, guanosine, cytidine, thymidine, inosine and xanthosine as substrates. Also catalyzes the reverse reactions. In Acinetobacter baylyi (strain ATCC 33305 / BD413 / ADP1), this protein is Pyrimidine/purine nucleoside phosphorylase.